We begin with the raw amino-acid sequence, 176 residues long: Small ribosomal subunit protein uS5 (176 aa).

The region spanning 15 to 78 is the S5 DRBM domain; that stretch reads FEERIVEIRR…SAARRNVFEV (64 aa).

The protein belongs to the universal ribosomal protein uS5 family. In terms of assembly, part of the 30S ribosomal subunit. Contacts proteins S4 and S8.

In terms of biological role, with S4 and S12 plays an important role in translational accuracy. Located at the back of the 30S subunit body where it stabilizes the conformation of the head with respect to the body. The chain is Small ribosomal subunit protein uS5 from Thermosipho africanus (strain TCF52B).